Consider the following 609-residue polypeptide: UvrABC system protein C (609 aa).

In terms of domain architecture, GIY-YIG spans 15 to 92 (TGSGVYQMQD…IKQFRPRYNV (78 aa)). The region spanning 202 to 237 (DQVIIKLTERMEVASENLVFEEAAHYRDQIRQLRRL) is the UVR domain.

This sequence belongs to the UvrC family. Interacts with UvrB in an incision complex.

It is found in the cytoplasm. The UvrABC repair system catalyzes the recognition and processing of DNA lesions. UvrC both incises the 5' and 3' sides of the lesion. The N-terminal half is responsible for the 3' incision and the C-terminal half is responsible for the 5' incision. The chain is UvrABC system protein C from Coxiella burnetii (strain RSA 331 / Henzerling II).